The sequence spans 132 residues: Small ribosomal subunit protein uS8 (132 aa).

It belongs to the universal ribosomal protein uS8 family. In terms of assembly, part of the 30S ribosomal subunit. Contacts proteins S5 and S12.

Its function is as follows. One of the primary rRNA binding proteins, it binds directly to 16S rRNA central domain where it helps coordinate assembly of the platform of the 30S subunit. The protein is Small ribosomal subunit protein uS8 of Geotalea uraniireducens (strain Rf4) (Geobacter uraniireducens).